The chain runs to 120 residues: PE family protein PE10 (120 aa).

The segment at 29–59 (GQVTGNGGSGNSGTSAAAANPNSDNTASIAD) is disordered. Positions 40-51 (SGTSAAAANPNS) are enriched in low complexity.

It belongs to the mycobacterial PE family. As to quaternary structure, forms a complex with PE9. The complex interacts with human TLR4.

It is found in the secreted. It localises to the cell wall. In terms of biological role, together with PE9, induces macrophage apoptosis through human Toll-like receptor 4 (TLR4) signaling pathway. Interaction with TLR4 leads to increased levels of phospho-IRF-3, increase in the transcript levels of IFN-beta and pro-apoptotic genes, up-regulation of IL-10, down-regulation of IL-1b and enhanced levels of macrophage apoptosis. The sequence is that of PE family protein PE10 from Mycobacterium tuberculosis (strain ATCC 25618 / H37Rv).